A 633-amino-acid chain; its full sequence is Glutamyl-tRNA(Gln) amidotransferase subunit E (633 aa).

This sequence belongs to the GatB/GatE family. GatE subfamily. Heterodimer of GatD and GatE.

It carries out the reaction L-glutamyl-tRNA(Gln) + L-glutamine + ATP + H2O = L-glutaminyl-tRNA(Gln) + L-glutamate + ADP + phosphate + H(+). Functionally, allows the formation of correctly charged Gln-tRNA(Gln) through the transamidation of misacylated Glu-tRNA(Gln) in organisms which lack glutaminyl-tRNA synthetase. The reaction takes place in the presence of glutamine and ATP through an activated gamma-phospho-Glu-tRNA(Gln). The GatDE system is specific for glutamate and does not act on aspartate. The protein is Glutamyl-tRNA(Gln) amidotransferase subunit E of Methanosarcina barkeri (strain Fusaro / DSM 804).